The sequence spans 189 residues: Calcyphosin (189 aa).

4 consecutive EF-hand domains span residues 21 to 56 (LGIQ…LGLV), 57 to 92 (LDTA…PMSQ), 93 to 128 (AREA…RTHP), and 136 to 172 (TEEE…VSAS). Residues D34, D36, S38, S40, E45, D70, D72, S74, T76, E81, D106, S108, D110, and D117 each contribute to the Ca(2+) site. Phosphoserine; by PKA is present on S40.

As to quaternary structure, monomer. Does not form oligomers in the presence of calcium. In terms of processing, phosphorylated in response to thyrotropin and cAMP. In terms of tissue distribution, detected in thyroid, salivary gland, lung, brain and cerebellum (at protein level).

It is found in the cytoplasm. Functionally, calcium-binding protein. May play a role in cellular signaling events (Potential). The chain is Calcyphosin (CAPS) from Canis lupus familiaris (Dog).